The sequence spans 374 residues: Translocating chain-associated membrane protein 1 (374 aa).

The Cytoplasmic segment spans residues 1-32 (MAIRKKSNKNPPVLSHEFVLQNHADIVSCLAM). Residues 33–53 (LFLLGLMFEITAKGAIIFVAL) form a helical membrane-spanning segment. The Lumenal portion of the chain corresponds to 54-81 (QYNVTRPATEEQAAESASLYYYGIKDLA). N-linked (GlcNAc...) asparagine glycosylation is present at Asn-56. A helical membrane pass occupies residues 82–102 (TVFFYMLVAIIVHAIIQEYVL). Residues 103 to 121 (DKINRRMHFSKTKHSKFNE) are Cytoplasmic-facing. The 210-residue stretch at 117–326 (SKFNESGQLS…NFQLRRWREH (210 aa)) folds into the TLC domain. Residues 122–142 (SGQLSAFYLFACVWGTFILVS) form a helical membrane-spanning segment. Residues 143–159 (ENYISDPTILWRAYPHN) are Lumenal-facing. The helical transmembrane segment at 160–180 (LMTFQMKFFYISQLAYWLHAF) threads the bilayer. Residues 181–192 (PELYFQKTKKED) are Cytoplasmic-facing. A helical transmembrane segment spans residues 193-213 (IPRQLVYIGLYLFHIAGAYLL). Position 214 (Asn-214) is a topological domain, lumenal. A helical membrane pass occupies residues 215–235 (LNHLGLVLLVLHYFVEFLFHI). The Cytoplasmic portion of the chain corresponds to 236–251 (SRLFYFSDEKYQKGFS). Residues 252 to 272 (LWAVLFVLGRLLTLILSVLTV) form a helical membrane-spanning segment. Residues 273 to 297 (GFGLARAENQKLDFSTGNFNVLAVR) lie on the Lumenal side of the membrane. Residues 298–318 (IAVLASICITQAFMMWKFINF) traverse the membrane as a helical segment. The Cytoplasmic portion of the chain corresponds to 319 to 374 (QLRRWREHSAFQAPPVKRKPAVTKGRSSRKGTENGVNGTVTSNGADSPRSRKEKSS). The interval 333–374 (PVKRKPAVTKGRSSRKGTENGVNGTVTSNGADSPRSRKEKSS) is disordered. Over residues 334–347 (VKRKPAVTKGRSSR) the composition is skewed to basic residues. A compositionally biased stretch (polar residues) spans 352–363 (NGVNGTVTSNGA). Residue Ser-365 is modified to Phosphoserine.

The protein belongs to the TRAM family. As to quaternary structure, interacts with SEC61B. May interact with Derlin-1/DERL1. Post-translationally, N-glycosylated.

It is found in the endoplasmic reticulum membrane. Functionally, involved in the translocation of nascent protein chains into or through the endoplasmic reticulum (ER) membrane by facilitating the proper chain positioning at the SEC61 channel. Regulates the exposure of nascent secretory protein chain to the cytosol during translocation into the ER. May affect the phospholipid bilayer in the vicinity of the lateral gate of the SEC61 channel, thereby facilitating ER protein transport. Intimately associates with transmembrane (TM) domain of nascent membrane proteins during the entire integration process into the ER membrane. Associates with the second TM domain of G-protein-coupled receptor opsin/OPSD nascent chain in the ER membrane, which may facilitate its integration into the membrane. Under conditions of ER stress, participates in the disposal of misfolded ER membrane proteins during the unfolded protein response (UPR), an integrated stress response (ISR) pathway, by selectively retrotranslocating misfolded ER-membrane proteins from the ER into the cytosol where they are ubiquitinated and degraded by the proteasome. The chain is Translocating chain-associated membrane protein 1 from Rattus norvegicus (Rat).